A 217-amino-acid polypeptide reads, in one-letter code: 3-demethoxyubiquinol 3-hydroxylase (217 aa).

The Fe cation site is built by glutamate 66, glutamate 96, histidine 99, glutamate 148, glutamate 180, and histidine 183.

It belongs to the COQ7 family. It depends on Fe cation as a cofactor.

The protein resides in the cell membrane. It catalyses the reaction a 5-methoxy-2-methyl-3-(all-trans-polyprenyl)benzene-1,4-diol + AH2 + O2 = a 3-demethylubiquinol + A + H2O. It participates in cofactor biosynthesis; ubiquinone biosynthesis. In terms of biological role, catalyzes the hydroxylation of 2-nonaprenyl-3-methyl-6-methoxy-1,4-benzoquinol during ubiquinone biosynthesis. The sequence is that of 3-demethoxyubiquinol 3-hydroxylase from Xylella fastidiosa (strain Temecula1 / ATCC 700964).